The primary structure comprises 67 residues: Large ribosomal subunit protein bL35 (67 aa).

The disordered stretch occupies residues 1 to 20; sequence MPKLKTKSGAKKRFVPKKSG.

This sequence belongs to the bacterial ribosomal protein bL35 family.

The polypeptide is Large ribosomal subunit protein bL35 (Anaeromyxobacter dehalogenans (strain 2CP-C)).